Consider the following 82-residue polypeptide: Putative antimicrobial peptide 7848 (82 aa).

An N-terminal signal peptide occupies residues 1-17 (MNENLWAAPAPKKLSKH). The segment at 16-60 (KHFFGRGGPLGKETGPNLFPKKPGAGKGLGFPPTKKPRGQPRVLK) is disordered. A propeptide spanning residues 38–82 (PGAGKGLGFPPTKKPRGQPRVLKKPKWNSEGLIGILHRGSDGVQF) is cleaved from the precursor. Residues 50–60 (KKPRGQPRVLK) show a composition bias toward basic residues.

Belongs to the non-disulfide-bridged peptide (NDBP) superfamily. Short antimicrobial peptide (group 4) family. Expressed by the venom gland.

The protein resides in the secreted. The polypeptide is Putative antimicrobial peptide 7848 (Urodacus yaschenkoi (Inland robust scorpion)).